Reading from the N-terminus, the 804-residue chain is Phenylalanine--tRNA ligase beta subunit (804 aa).

A tRNA-binding domain is found at 38-148 (RSYLKGFVIA…EDVPIGASFA (111 aa)). Residues 401–476 (PEIRQITFPL…RIYGLDKIKP (76 aa)) form the B5 domain. Asp454, Asp460, Glu463, and Glu464 together coordinate Mg(2+). An FDX-ACB domain is found at 710-803 (SSLQMVRRDF…VTRMTGASLR (94 aa)).

Belongs to the phenylalanyl-tRNA synthetase beta subunit family. Type 1 subfamily. In terms of assembly, tetramer of two alpha and two beta subunits. Mg(2+) serves as cofactor.

Its subcellular location is the cytoplasm. It carries out the reaction tRNA(Phe) + L-phenylalanine + ATP = L-phenylalanyl-tRNA(Phe) + AMP + diphosphate + H(+). The protein is Phenylalanine--tRNA ligase beta subunit of Bartonella henselae (strain ATCC 49882 / DSM 28221 / CCUG 30454 / Houston 1) (Rochalimaea henselae).